Here is a 460-residue protein sequence, read N- to C-terminus: UDP-N-acetylmuramoylalanine--D-glutamate ligase (460 aa).

ATP is bound at residue 120–126 (GSNGKTT).

Belongs to the MurCDEF family.

Its subcellular location is the cytoplasm. It carries out the reaction UDP-N-acetyl-alpha-D-muramoyl-L-alanine + D-glutamate + ATP = UDP-N-acetyl-alpha-D-muramoyl-L-alanyl-D-glutamate + ADP + phosphate + H(+). Its pathway is cell wall biogenesis; peptidoglycan biosynthesis. In terms of biological role, cell wall formation. Catalyzes the addition of glutamate to the nucleotide precursor UDP-N-acetylmuramoyl-L-alanine (UMA). This is UDP-N-acetylmuramoylalanine--D-glutamate ligase from Lactobacillus johnsonii (strain CNCM I-12250 / La1 / NCC 533).